A 388-amino-acid chain; its full sequence is Succinate--CoA ligase [ADP-forming] subunit beta (388 aa).

The ATP-grasp domain occupies 9–244 (KQLFAEYGLP…PSQDDAREAH (236 aa)). ATP-binding positions include Lys-46, 53 to 55 (GRG), Glu-99, Thr-102, and Glu-107. Positions 199 and 213 each coordinate Mg(2+). Substrate-binding positions include Asn-264 and 321–323 (GIV).

Belongs to the succinate/malate CoA ligase beta subunit family. As to quaternary structure, heterotetramer of two alpha and two beta subunits. Mg(2+) is required as a cofactor.

The catalysed reaction is succinate + ATP + CoA = succinyl-CoA + ADP + phosphate. The enzyme catalyses GTP + succinate + CoA = succinyl-CoA + GDP + phosphate. Its pathway is carbohydrate metabolism; tricarboxylic acid cycle; succinate from succinyl-CoA (ligase route): step 1/1. Succinyl-CoA synthetase functions in the citric acid cycle (TCA), coupling the hydrolysis of succinyl-CoA to the synthesis of either ATP or GTP and thus represents the only step of substrate-level phosphorylation in the TCA. The beta subunit provides nucleotide specificity of the enzyme and binds the substrate succinate, while the binding sites for coenzyme A and phosphate are found in the alpha subunit. This is Succinate--CoA ligase [ADP-forming] subunit beta from Pseudomonas putida (strain ATCC 700007 / DSM 6899 / JCM 31910 / BCRC 17059 / LMG 24140 / F1).